We begin with the raw amino-acid sequence, 765 residues long: Proton-coupled zinc antiporter SLC30A5 (765 aa).

Met1 carries the post-translational modification N-acetylmethionine. Residues 1–32 (MEEKYGGDVLAGPGGGGGLGPVDVPSARLTKY) are Cytoplasmic-facing. The helical transmembrane segment at 33 to 53 (IVLLCFTKFLKAVGLFESYDL) threads the bilayer. Residues 54 to 56 (LKA) are Lumenal-facing. A helical transmembrane segment spans residues 57 to 77 (VHIVQFIFILKLGTAFFMVLF). At 78–98 (QKPFSSGKTITKHQWIKIFKH) the chain is on the cytoplasmic side. The helical transmembrane segment at 99-119 (AVAGCIISLLWFFGLTLCGPL) threads the bilayer. Arg120 is a topological domain (lumenal). A helical membrane pass occupies residues 121–141 (TLLLFEHSDIVVISLLSVLFT). The Cytoplasmic portion of the chain corresponds to 142–152 (SSGGGPAKTRG). The helical transmembrane segment at 153-173 (AAFFIIAVICLLLFDNDDLMA) threads the bilayer. At 174–193 (KMAEHPEGHHDSALTHMLYT) the chain is on the lumenal side. A helical membrane pass occupies residues 194 to 214 (AIAFLGVADHKGGVLLLVLAL). Topologically, residues 215-238 (CCKVGFHTASRKLSVDVGGAKRLQ) are cytoplasmic. A helical membrane pass occupies residues 239–259 (ALSHLVSVLLLCPWVIVLSVT). Residues 260–267 (TESKVESW) are Lumenal-facing. The chain crosses the membrane as a helical span at residues 268-288 (FSLIMPFATVIFFVMILDFYV). The Cytoplasmic portion of the chain corresponds to 289-303 (DSICSVKMEVSKCAR). A helical membrane pass occupies residues 304 to 324 (YGSFPIFISALLFGNFWTHPI). Topologically, residues 325–342 (TDQLRAMNKAAHQESTEH) are lumenal. A helical transmembrane segment spans residues 343 to 363 (VLSGGVVVSAIFFILSANILS). Over 364–418 (SPSKRGQKGTLIGYSPEGTPLYNFMGDAFQHSSQSIPRFIKESLKQILEESDSRQ) the chain is Cytoplasmic. A helical transmembrane segment spans residues 419–439 (IFYFLCLNLLFTFVELFYGVL). A mediates homodimerization with SLC30A6 region spans residues 420-640 (FYFLCLNLLF…ILIFLSVVPL (221 aa)). Residues 440 to 448 (TNSLGLISD) are Lumenal-facing. The chain crosses the membrane as a helical span at residues 449-469 (GFHMLFDCSALVMGLFAALMS). The Zn(2+) site is built by His451 and Asp455. Residues 470–483 (RWKATRIFSYGYGR) are Cytoplasmic-facing. The helical transmembrane segment at 484–504 (IEILSGFINGLFLIVIAFFVF) threads the bilayer. The Lumenal segment spans residues 505–520 (MESVARLIDPPELDTH). Residues 521 to 541 (MLTPVSVGGLIVNLIGICAFS) traverse the membrane as a helical segment. Positions 542 to 578 (HAHSHAHGASQGSCHSSDHSHSHHMHGHSDHGHGHSH) are his-rich loop; required for zinc transport. Topologically, residues 542 to 592 (HAHSHAHGASQGSCHSSDHSHSHHMHGHSDHGHGHSHGSAGGGMNANMRGV) are cytoplasmic. A disordered region spans residues 551 to 581 (SQGSCHSSDHSHSHHMHGHSDHGHGHSHGSA). A helical transmembrane segment spans residues 593–613 (FLHVLADTLGSIGVIVSTVLI). Zn(2+) contacts are provided by His595 and Asp599. Topologically, residues 614–617 (EQFG) are lumenal. The chain crosses the membrane as a helical span at residues 618-638 (WFIADPLCSLFIAILIFLSVV). Over 639-765 (PLIKDACQVL…KYCKDGTYIM (127 aa)) the chain is Cytoplasmic.

Belongs to the cation diffusion facilitator (CDF) transporter (TC 2.A.4) family. SLC30A subfamily. Heterodimer with SLC30A6/ZNT6; form a functional zinc ion transmembrane transporter. Post-translationally, could homodimerize through the formation of dityrosine bonds upon oxidative stress. In terms of tissue distribution, ubiquitously expressed. Highly expressed in pancreas, liver and kidney. Expressed abundantly in insulin-containing beta cells, undetectable in other endocrine cell types including glucagon-secreting alpha cells and most acinar cells (at protein level).

Its subcellular location is the golgi apparatus. It is found in the golgi stack membrane. The protein localises to the cytoplasmic vesicle. The protein resides in the COPII-coated vesicle membrane. It localises to the secretory vesicle membrane. Its subcellular location is the trans-Golgi network membrane. It is found in the endoplasmic reticulum membrane. The protein localises to the cell membrane. The protein resides in the apical cell membrane. It carries out the reaction Zn(2+)(in) + 2 H(+)(out) = Zn(2+)(out) + 2 H(+)(in). Its function is as follows. Together with SLC30A6 forms a functional proton-coupled zinc ion antiporter mediating zinc entry into the lumen of organelles along the secretory pathway. By contributing to zinc ion homeostasis within the early secretory pathway, regulates the activation and folding of enzymes like alkaline phosphatases and enzymes involved in phosphatidylinositol glycan anchor biosynthesis. Through the transport of zinc into secretory granules of pancreatic beta-cells, plays an important role in the storage and secretion of insulin. In terms of biological role, zinc ion:proton antiporter mediating influx and efflux of zinc at the plasma membrane. This chain is Proton-coupled zinc antiporter SLC30A5, found in Homo sapiens (Human).